The sequence spans 424 residues: UDP-N-acetylglucosamine 1-carboxyvinyltransferase (424 aa).

22 to 23 (KN) is a phosphoenolpyruvate binding site. Arg-93 contributes to the UDP-N-acetyl-alpha-D-glucosamine binding site. Cys-117 serves as the catalytic Proton donor. At Cys-117 the chain carries 2-(S-cysteinyl)pyruvic acid O-phosphothioketal. UDP-N-acetyl-alpha-D-glucosamine-binding positions include 122–126 (RPVDL), 162–165 (KVSV), Asp-307, and Ile-329.

This sequence belongs to the EPSP synthase family. MurA subfamily.

It is found in the cytoplasm. The enzyme catalyses phosphoenolpyruvate + UDP-N-acetyl-alpha-D-glucosamine = UDP-N-acetyl-3-O-(1-carboxyvinyl)-alpha-D-glucosamine + phosphate. It functions in the pathway cell wall biogenesis; peptidoglycan biosynthesis. Functionally, cell wall formation. Adds enolpyruvyl to UDP-N-acetylglucosamine. This is UDP-N-acetylglucosamine 1-carboxyvinyltransferase from Haemophilus influenzae (strain PittGG).